A 223-amino-acid chain; its full sequence is DNA mismatch repair protein MutH (223 aa).

The protein belongs to the MutH family.

It localises to the cytoplasm. Functionally, sequence-specific endonuclease that cleaves unmethylated GATC sequences. It is involved in DNA mismatch repair. The polypeptide is DNA mismatch repair protein MutH (Shewanella baltica (strain OS195)).